The sequence spans 1051 residues: Carbamoyl phosphate synthase large chain (1051 aa).

Positions 1-399 (MKETPKKVLV…SLQKAVRMLD (399 aa)) are carboxyphosphate synthetic domain. ATP contacts are provided by R127, R167, G173, G174, K206, L208, E213, G239, V240, H241, Q282, and E296. In terms of domain architecture, ATP-grasp 1 spans 131-325 (RETMIENNLP…LAYVSAKLAL (195 aa)). Residues Q282, E296, and N298 each contribute to the Mg(2+) site. Q282, E296, and N298 together coordinate Mn(2+). An oligomerization domain region spans residues 400–548 (IGEPGVVGGK…LTYNGTEDDL (149 aa)). Residues 549–930 (EFSQGNKLLI…LKSWLSSIPN (382 aa)) are carbamoyl phosphate synthetic domain. An ATP-grasp 2 domain is found at 673 to 863 (SKLLDKLGIS…LINEAMKAIF (191 aa)). Residues R709, K748, I750, E755, G779, V780, H781, S782, Q822, and E834 each contribute to the ATP site. The Mg(2+) site is built by Q822, E834, and N836. Q822, E834, and N836 together coordinate Mn(2+). The region spanning 930-1051 (NRIPNKNGIA…FEISEYGGGI (122 aa)) is the MGS-like domain. The segment at 931-1051 (RIPNKNGIAL…FEISEYGGGI (121 aa)) is allosteric domain.

This sequence belongs to the CarB family. As to quaternary structure, composed of two chains; the small (or glutamine) chain promotes the hydrolysis of glutamine to ammonia, which is used by the large (or ammonia) chain to synthesize carbamoyl phosphate. Tetramer of heterodimers (alpha,beta)4. Mg(2+) is required as a cofactor. Requires Mn(2+) as cofactor.

The enzyme catalyses hydrogencarbonate + L-glutamine + 2 ATP + H2O = carbamoyl phosphate + L-glutamate + 2 ADP + phosphate + 2 H(+). It catalyses the reaction hydrogencarbonate + NH4(+) + 2 ATP = carbamoyl phosphate + 2 ADP + phosphate + 2 H(+). It functions in the pathway amino-acid biosynthesis; L-arginine biosynthesis; carbamoyl phosphate from bicarbonate: step 1/1. Its pathway is pyrimidine metabolism; UMP biosynthesis via de novo pathway; (S)-dihydroorotate from bicarbonate: step 1/3. Its function is as follows. Large subunit of the glutamine-dependent carbamoyl phosphate synthetase (CPSase). CPSase catalyzes the formation of carbamoyl phosphate from the ammonia moiety of glutamine, carbonate, and phosphate donated by ATP, constituting the first step of 2 biosynthetic pathways, one leading to arginine and/or urea and the other to pyrimidine nucleotides. The large subunit (synthetase) binds the substrates ammonia (free or transferred from glutamine from the small subunit), hydrogencarbonate and ATP and carries out an ATP-coupled ligase reaction, activating hydrogencarbonate by forming carboxy phosphate which reacts with ammonia to form carbamoyl phosphate. The protein is Carbamoyl phosphate synthase large chain of Saccharolobus islandicus (strain L.S.2.15 / Lassen #1) (Sulfolobus islandicus).